The sequence spans 314 residues: Regulator of microtubule dynamics protein 1 (314 aa).

Lys165 is subject to N6-succinyllysine. TPR repeat units follow at residues 168–204 (AICL…NPKD) and 222–258 (PWYQ…DPNF).

It belongs to the RMDN family. Interacts with microtubules.

Its subcellular location is the cytoplasm. The protein localises to the cytoskeleton. It is found in the spindle. The protein resides in the spindle pole. The chain is Regulator of microtubule dynamics protein 1 (RMDN1) from Homo sapiens (Human).